A 234-amino-acid chain; its full sequence is Sugar fermentation stimulation protein homolog (234 aa).

The protein belongs to the SfsA family.

This is Sugar fermentation stimulation protein homolog from Pectobacterium atrosepticum (strain SCRI 1043 / ATCC BAA-672) (Erwinia carotovora subsp. atroseptica).